A 431-amino-acid polypeptide reads, in one-letter code: Trigger factor (431 aa).

The 86-residue stretch at 158 to 243 (GHLVALETWS…VIEVSEPVLL (86 aa)) folds into the PPIase FKBP-type domain.

The protein belongs to the FKBP-type PPIase family. Tig subfamily.

Its subcellular location is the cytoplasm. The enzyme catalyses [protein]-peptidylproline (omega=180) = [protein]-peptidylproline (omega=0). In terms of biological role, involved in protein export. Acts as a chaperone by maintaining the newly synthesized protein in an open conformation. Functions as a peptidyl-prolyl cis-trans isomerase. This chain is Trigger factor (tig), found in Xylella fastidiosa (strain 9a5c).